We begin with the raw amino-acid sequence, 533 residues long: Protein mono-ADP-ribosyltransferase PARP3 (533 aa).

Positions 1–30 (MAPKPKPWVQTEGPEKKKGRQAGREEDPFR) are disordered. Lys-6 bears the N6-(ADP-ribosyl)lysine mark. 4 positions are modified to ADP-ribosyl glutamic acid: Glu-12, Glu-15, Glu-26, and Glu-34. The short motif at 14–20 (PEKKKGR) is the Nuclear localization signal element. Lys-37 carries the post-translational modification N6-(ADP-ribosyl)lysine. Residues 59 to 150 (GTQVYEDYNC…DHFVSHPGKY (92 aa)) form the WGR domain. Asp-141 is subject to ADP-ribosyl aspartic acid. Position 163 is an ADP-ribosyl glutamic acid (Glu-163). Residues 182–300 (PCSLDPATQK…DIELAQALQA (119 aa)) form the PARP alpha-helical domain. Asp-210 carries the post-translational modification ADP-ribosyl aspartic acid. An ADP-ribosyl glutamic acid mark is found at Glu-231, Glu-309, Glu-310, Glu-344, and Glu-449. The PARP catalytic domain maps to 313 to 533 (HPLDRDYQLL…RLRYLLEVHL (221 aa)). The interval 454–482 (TDNPSLKSPPPGFDSVIARGHTEPDPTQD) is disordered.

It belongs to the ARTD/PARP family. In terms of assembly, interacts with PARP1; leading to activate PARP1 in absence of DNA. Interacts with PRKDC. Interacts with XRCC5/Ku80; the interaction is dependent on nucleic acids. Interacts with XRCC6/Ku70; the interaction is dependent on nucleic acids. Interacts with EZH2, HDAC1, HDAC2, SUZ12, YY1, LRIG3 and LIG4. In terms of processing, auto-mono-ADP-ribosylated. As to expression, widely expressed; the highest levels are in the kidney, skeletal muscle, liver, heart and spleen; also detected in pancreas, lung, placenta, brain, leukocytes, colon, small intestine, ovary, testis, prostate and thymus.

The protein resides in the nucleus. Its subcellular location is the chromosome. The protein localises to the cytoplasm. It localises to the cytoskeleton. It is found in the microtubule organizing center. The protein resides in the centrosome. Its subcellular location is the centriole. The enzyme catalyses L-aspartyl-[protein] + NAD(+) = 4-O-(ADP-D-ribosyl)-L-aspartyl-[protein] + nicotinamide. It catalyses the reaction L-glutamyl-[protein] + NAD(+) = 5-O-(ADP-D-ribosyl)-L-glutamyl-[protein] + nicotinamide. The catalysed reaction is L-lysyl-[protein] + NAD(+) = N(6)-(ADP-D-ribosyl)-L-lysyl-[protein] + nicotinamide + H(+). With respect to regulation, mono-ADP-ribosyltransferase activity of PARP3 is selectively inhibited by ME0328 compound; ME0328 does not inhibit other ARTD/PARP enzymes, such as PARP1. Mono-ADP-ribosyltransferase is strongly inhibited by KU0058948 compound. In terms of biological role, mono-ADP-ribosyltransferase that mediates mono-ADP-ribosylation of target proteins and plays a key role in the response to DNA damage. Mediates mono-ADP-ribosylation of glutamate, aspartate or lysine residues on target proteins. In contrast to PARP1 and PARP2, it is not able to mediate poly-ADP-ribosylation. Involved in DNA repair by mediating mono-ADP-ribosylation of a limited number of acceptor proteins involved in chromatin architecture and in DNA metabolism, such as histone H2B, XRCC5 and XRCC6. ADP-ribosylation follows DNA damage and appears as an obligatory step in a detection/signaling pathway leading to the reparation of DNA strand breaks. Involved in single-strand break repair by catalyzing mono-ADP-ribosylation of histone H2B on 'Glu-2' (H2BE2ADPr) of nucleosomes containing nicked DNA. Cooperates with the XRCC5-XRCC6 (Ku80-Ku70) heterodimer to limit end-resection thereby promoting accurate NHEJ. Suppresses G-quadruplex (G4) structures in response to DNA damage. Associates with a number of DNA repair factors and is involved in the response to exogenous and endogenous DNA strand breaks. Together with APLF, promotes the retention of the LIG4-XRCC4 complex on chromatin and accelerate DNA ligation during non-homologous end-joining (NHEJ). May link the DNA damage surveillance network to the mitotic fidelity checkpoint. Acts as a negative regulator of immunoglobulin class switch recombination, probably by controlling the level of AICDA /AID on the chromatin. In addition to proteins, also able to ADP-ribosylate DNA: mediates DNA mono-ADP-ribosylation of DNA strand break termini via covalent addition of a single ADP-ribose moiety to a 5'- or 3'-terminal phosphate residues in DNA containing multiple strand breaks. The chain is Protein mono-ADP-ribosyltransferase PARP3 from Homo sapiens (Human).